The sequence spans 145 residues: MKPVPLVLLITSVLLTTHIPLSTCRPRDLSLVNSQLDDVLSNGAGDDAMSYLVGEKLLQYLQRNLGAQKASGVLHLPHFPAAQLRSPHEDSSLEELTEFSKRNDDPPISIDLTFHLLRNMIEMARNENQREQAGLNRKYLDEVGK.

Residues 1–22 (MKPVPLVLLITSVLLTTHIPLS) form the signal peptide. Residue V143 is modified to Valine amide.

The protein belongs to the sauvagine/corticotropin-releasing factor/urotensin I family.

It is found in the secreted. In terms of biological role, urotensin is found in the teleost caudal neurosecretory system. It has a suggested role in osmoregulation and as a corticotropin-releasing factor. The non-hormonal portion of this precursor may be a urotensin binding protein, urophysin. This Carassius auratus (Goldfish) protein is UI.